The following is a 112-amino-acid chain: uncharacterized protein (112 aa).

Residues 1-11 (MAESVASSESL) show a composition bias toward polar residues. The disordered stretch occupies residues 1-32 (MAESVASSESLPQMKPEEPESKKSPSREAIPK). Positions 15-31 (KPEEPESKKSPSREAIP) are enriched in basic and acidic residues. Residues 81–101 (VVFIFMIAIMSMLVIGLVVCG) traverse the membrane as a helical segment.

Its subcellular location is the membrane. This is an uncharacterized protein from Encephalitozoon cuniculi (strain GB-M1) (Microsporidian parasite).